The following is a 161-amino-acid chain: 3-isopropylmalate dehydratase small subunit (161 aa).

The protein belongs to the LeuD family. LeuD type 2 subfamily. Heterodimer of LeuC and LeuD.

The catalysed reaction is (2R,3S)-3-isopropylmalate = (2S)-2-isopropylmalate. It functions in the pathway amino-acid biosynthesis; L-leucine biosynthesis; L-leucine from 3-methyl-2-oxobutanoate: step 2/4. Its function is as follows. Catalyzes the isomerization between 2-isopropylmalate and 3-isopropylmalate, via the formation of 2-isopropylmaleate. This is 3-isopropylmalate dehydratase small subunit from Clostridium beijerinckii (strain ATCC 51743 / NCIMB 8052) (Clostridium acetobutylicum).